A 92-amino-acid polypeptide reads, in one-letter code: uncharacterized protein (92 aa).

This is an uncharacterized protein from Treponema pallidum (strain Nichols).